Here is a 357-residue protein sequence, read N- to C-terminus: Membrane-bound lytic murein transglycosylase C (357 aa).

Residues Met-1 to Ala-15 form the signal peptide. Cys-16 carries N-palmitoyl cysteine lipidation. Cys-16 is lipidated: S-diacylglycerol cysteine.

This sequence belongs to the transglycosylase Slt family.

It is found in the cell outer membrane. The enzyme catalyses Exolytic cleavage of the (1-&gt;4)-beta-glycosidic linkage between N-acetylmuramic acid (MurNAc) and N-acetylglucosamine (GlcNAc) residues in peptidoglycan, from either the reducing or the non-reducing ends of the peptidoglycan chains, with concomitant formation of a 1,6-anhydrobond in the MurNAc residue.. Its function is as follows. Murein-degrading enzyme. May play a role in recycling of muropeptides during cell elongation and/or cell division. The sequence is that of Membrane-bound lytic murein transglycosylase C from Haemophilus influenzae (strain PittGG).